A 50-amino-acid chain; its full sequence is Large ribosomal subunit protein eL39 (50 aa).

The segment covering 1–12 has biased composition (basic residues); the sequence is MGKKSKASKKRL. Disordered regions lie at residues 1 to 20 and 30 to 50; these read MGKKSKASKKRLAKLERQNS and TNRDVQRNPKRRNWRRNDTDE.

Belongs to the eukaryotic ribosomal protein eL39 family.

The sequence is that of Large ribosomal subunit protein eL39 (rpl39e) from Halobacterium salinarum (strain ATCC 700922 / JCM 11081 / NRC-1) (Halobacterium halobium).